Here is a 179-residue protein sequence, read N- to C-terminus: Translation initiation factor IF-3 (179 aa).

Belongs to the IF-3 family. As to quaternary structure, monomer.

The protein localises to the cytoplasm. Functionally, IF-3 binds to the 30S ribosomal subunit and shifts the equilibrium between 70S ribosomes and their 50S and 30S subunits in favor of the free subunits, thus enhancing the availability of 30S subunits on which protein synthesis initiation begins. This Bradyrhizobium diazoefficiens (strain JCM 10833 / BCRC 13528 / IAM 13628 / NBRC 14792 / USDA 110) protein is Translation initiation factor IF-3.